Here is a 237-residue protein sequence, read N- to C-terminus: Ribosomal RNA small subunit methyltransferase G (237 aa).

S-adenosyl-L-methionine is bound by residues Gly-78, Phe-83, 129–130, and Arg-148; that span reads AE.

It belongs to the methyltransferase superfamily. RNA methyltransferase RsmG family.

Its subcellular location is the cytoplasm. Specifically methylates the N7 position of a guanine in 16S rRNA. The polypeptide is Ribosomal RNA small subunit methyltransferase G (Streptococcus equi subsp. equi (strain 4047)).